The primary structure comprises 161 residues: Nucleotide-binding protein lpl1175 (161 aa).

This sequence belongs to the YajQ family.

Functionally, nucleotide-binding protein. This is Nucleotide-binding protein lpl1175 from Legionella pneumophila (strain Lens).